A 496-amino-acid chain; its full sequence is Probable cytosol aminopeptidase (496 aa).

Positions 262 and 267 each coordinate Mn(2+). The active site involves K274. Mn(2+) is bound by residues D285, D344, and E346. R348 is an active-site residue.

It belongs to the peptidase M17 family. It depends on Mn(2+) as a cofactor.

It is found in the cytoplasm. The catalysed reaction is Release of an N-terminal amino acid, Xaa-|-Yaa-, in which Xaa is preferably Leu, but may be other amino acids including Pro although not Arg or Lys, and Yaa may be Pro. Amino acid amides and methyl esters are also readily hydrolyzed, but rates on arylamides are exceedingly low.. It carries out the reaction Release of an N-terminal amino acid, preferentially leucine, but not glutamic or aspartic acids.. Presumably involved in the processing and regular turnover of intracellular proteins. Catalyzes the removal of unsubstituted N-terminal amino acids from various peptides. This is Probable cytosol aminopeptidase from Rhizobium leguminosarum bv. trifolii (strain WSM2304).